We begin with the raw amino-acid sequence, 316 residues long: Methionyl-tRNA formyltransferase (316 aa).

A (6S)-5,6,7,8-tetrahydrofolate-binding site is contributed by 109–112 (SLLP).

The protein belongs to the Fmt family.

The catalysed reaction is L-methionyl-tRNA(fMet) + (6R)-10-formyltetrahydrofolate = N-formyl-L-methionyl-tRNA(fMet) + (6S)-5,6,7,8-tetrahydrofolate + H(+). Its function is as follows. Attaches a formyl group to the free amino group of methionyl-tRNA(fMet). The formyl group appears to play a dual role in the initiator identity of N-formylmethionyl-tRNA by promoting its recognition by IF2 and preventing the misappropriation of this tRNA by the elongation apparatus. This is Methionyl-tRNA formyltransferase from Nitrosomonas eutropha (strain DSM 101675 / C91 / Nm57).